The following is a 624-amino-acid chain: MKGQETRGFQSEVKQLLHLMIHSLYSNKEIFLRELISNASDAADKLRFRALSNPDLYEGDGELRVRVSFDKDKRTLTISDNGVGMTRDEVIDHLGTIAKSGTKSFLESLGSDQAKDSQLIGQFGVGFYSAFIVADKVTVRTRAAGEKPENGVFWESAGEGEYTVADITKEDRGTEITLHLREGEDEFLDDWRVRSIISKYSDHIALPVEIEKREEKDGETVISWEKINKAQALWTRNKSEITDEEYKEFYKHIAHDFNDPLTWSHNRVEGKQEYTSLLYIPSQAPWDMWNRDHKHGLKLYVQRVFIMDDAEQFMPNYLRFVRGLIDSSDLPLNVSREILQDSTVTRNLRNALTKRVLQMLEKLAKDDAEKYQTFWQQFGLVLKEGPAEDFANQEAIAKLLRFASTHTDSSAQTVSLEDYVSRMKEGQEKIYYITADSYAAAKSSPHLELLRKKGIEVLLLSDRIDEWMMNYLTEFDGKPFQSVSKVDESLEKLADEVDESAKEAEKALTPFIDRVKALLGERVKDVRLTHRLTDTPAIVSTDADEMSTQMAKLFAAAGQKVPEVKYIFELNPDHVLVKRAADTEDEAKFSEWVELLLDQALLAERGTLEDPNLFIRRMNQLLVS.

The tract at residues 1–336 (MKGQETRGFQ…SSDLPLNVSR (336 aa)) is a; substrate-binding. The interval 337-552 (EILQDSTVTR…ADEMSTQMAK (216 aa)) is b. Residues 553-624 (LFAAAGQKVP…IRRMNQLLVS (72 aa)) are c.

It belongs to the heat shock protein 90 family. Homodimer.

The protein localises to the cytoplasm. In terms of biological role, molecular chaperone. Has ATPase activity. This chain is Chaperone protein HtpG, found in Shigella boydii serotype 4 (strain Sb227).